The chain runs to 115 residues: Large ribosomal subunit protein bL31B (115 aa).

This sequence belongs to the bacterial ribosomal protein bL31 family. Type B subfamily. Part of the 50S ribosomal subunit.

In Polynucleobacter necessarius subsp. necessarius (strain STIR1), this protein is Large ribosomal subunit protein bL31B.